The sequence spans 614 residues: Chaperone protein DnaK (614 aa).

T173 is subject to Phosphothreonine; by autocatalysis. Composition is skewed to basic and acidic residues over residues 490–509 (EENAEADKKRREESDLRNEA) and 529–542 (EEDKQNAEDKKEAL). Disordered stretches follow at residues 490 to 510 (EENAEADKKRREESDLRNEAD), 524 to 555 (GENISEEDKQNAEDKKEALKSALEGEDIDDIK), and 575 to 614 (QAAQAQQQAQGEDANASQDSNVEDADFKEVKDDDNQDNQK). Positions 575–584 (QAAQAQQQAQ) are enriched in low complexity. The span at 599–614 (ADFKEVKDDDNQDNQK) shows a compositional bias: basic and acidic residues.

It belongs to the heat shock protein 70 family.

In terms of biological role, acts as a chaperone. This chain is Chaperone protein DnaK, found in Staphylococcus saprophyticus subsp. saprophyticus (strain ATCC 15305 / DSM 20229 / NCIMB 8711 / NCTC 7292 / S-41).